We begin with the raw amino-acid sequence, 739 residues long: Phosphoribosylformylglycinamidine synthase subunit PurL (739 aa).

His-54 is a catalytic residue. Residues Tyr-57 and Lys-96 each coordinate ATP. Glu-98 serves as a coordination point for Mg(2+). Residues 99 to 102 and Arg-121 contribute to the substrate site; that span reads SHNH. His-100 functions as the Proton acceptor in the catalytic mechanism. Residue Asp-122 coordinates Mg(2+). A substrate-binding site is contributed by Gln-245. A Mg(2+)-binding site is contributed by Asp-273. 317 to 319 provides a ligand contact to substrate; sequence ESQ. 2 residues coordinate ATP: Asp-500 and Gly-537. Residue Asn-538 coordinates Mg(2+). Ser-540 serves as a coordination point for substrate.

The protein belongs to the FGAMS family. As to quaternary structure, monomer. Part of the FGAM synthase complex composed of 1 PurL, 1 PurQ and 2 PurS subunits.

The protein localises to the cytoplasm. The catalysed reaction is N(2)-formyl-N(1)-(5-phospho-beta-D-ribosyl)glycinamide + L-glutamine + ATP + H2O = 2-formamido-N(1)-(5-O-phospho-beta-D-ribosyl)acetamidine + L-glutamate + ADP + phosphate + H(+). It functions in the pathway purine metabolism; IMP biosynthesis via de novo pathway; 5-amino-1-(5-phospho-D-ribosyl)imidazole from N(2)-formyl-N(1)-(5-phospho-D-ribosyl)glycinamide: step 1/2. Part of the phosphoribosylformylglycinamidine synthase complex involved in the purines biosynthetic pathway. Catalyzes the ATP-dependent conversion of formylglycinamide ribonucleotide (FGAR) and glutamine to yield formylglycinamidine ribonucleotide (FGAM) and glutamate. The FGAM synthase complex is composed of three subunits. PurQ produces an ammonia molecule by converting glutamine to glutamate. PurL transfers the ammonia molecule to FGAR to form FGAM in an ATP-dependent manner. PurS interacts with PurQ and PurL and is thought to assist in the transfer of the ammonia molecule from PurQ to PurL. This chain is Phosphoribosylformylglycinamidine synthase subunit PurL, found in Bacillus cereus (strain ZK / E33L).